Reading from the N-terminus, the 131-residue chain is Translation initiation factor 5A (131 aa).

At Lys-36 the chain carries Hypusine.

This sequence belongs to the eIF-5A family.

It localises to the cytoplasm. In terms of biological role, functions by promoting the formation of the first peptide bond. The protein is Translation initiation factor 5A of Saccharolobus solfataricus (strain ATCC 35092 / DSM 1617 / JCM 11322 / P2) (Sulfolobus solfataricus).